Consider the following 93-residue polypeptide: MAVENIVWPRYLDASITRSDGRRVSLQDAIEDPEVDEIAEAVQQIGYDAVIEHDVAHPREWGTSGRVIVKGADDSSKNDLVQAVAAYIHLLRE.

It belongs to the SRP19 family. As to quaternary structure, part of the signal recognition particle protein translocation system, which is composed of SRP and FtsY. Archaeal SRP consists of a 7S RNA molecule of 300 nucleotides and two protein subunits: SRP54 and SRP19.

The protein resides in the cytoplasm. Its function is as follows. Involved in targeting and insertion of nascent membrane proteins into the cytoplasmic membrane. Binds directly to 7S RNA and mediates binding of the 54 kDa subunit of the SRP. The polypeptide is Signal recognition particle 19 kDa protein (Haloquadratum walsbyi (strain DSM 16790 / HBSQ001)).